The primary structure comprises 314 residues: MTEENQTVISQFLLLGLPIPSEHQHVFYALFLSMYLTTVLGNLIIIILIHLDSHLHTPMYLFLSNLSFSDLCFSSVTMPKLLQNMQSQVPSIPFAGCLTQLYFYLYFADLESFLLVAMAYDRYVAICFPLHYMSIMSPKLCVSLVVLSWVLTTFHAMLHTLLMARLSFCADNMIPHFFCDISPLLKLSCSDTHVNELVIFVMGGLVIVIPFVLIIVSYARVVASILKVPSVRGIHKIFSTCGSHLSVVSLFYGTIIGLYLCPSANNSTVKETVMAMMYTVVTPMLNPFIYSLRNRDMKEALIRVLCKKKITFCL.

The Extracellular portion of the chain corresponds to 1–25 (MTEENQTVISQFLLLGLPIPSEHQH). N5 is a glycosylation site (N-linked (GlcNAc...) asparagine). A helical transmembrane segment spans residues 26–49 (VFYALFLSMYLTTVLGNLIIIILI). The Cytoplasmic portion of the chain corresponds to 50–57 (HLDSHLHT). A helical membrane pass occupies residues 58–79 (PMYLFLSNLSFSDLCFSSVTMP). Residues 80–100 (KLLQNMQSQVPSIPFAGCLTQ) are Extracellular-facing. C97 and C189 are disulfide-bonded. A helical membrane pass occupies residues 101-120 (LYFYLYFADLESFLLVAMAY). The Cytoplasmic segment spans residues 121–139 (DRYVAICFPLHYMSIMSPK). Residues 140–158 (LCVSLVVLSWVLTTFHAML) form a helical membrane-spanning segment. The Extracellular portion of the chain corresponds to 159–196 (HTLLMARLSFCADNMIPHFFCDISPLLKLSCSDTHVNE). Residues 197-219 (LVIFVMGGLVIVIPFVLIIVSYA) form a helical membrane-spanning segment. Over 220 to 236 (RVVASILKVPSVRGIHK) the chain is Cytoplasmic. A helical transmembrane segment spans residues 237 to 260 (IFSTCGSHLSVVSLFYGTIIGLYL). Residues 261 to 272 (CPSANNSTVKET) lie on the Extracellular side of the membrane. The chain crosses the membrane as a helical span at residues 273-292 (VMAMMYTVVTPMLNPFIYSL). Residues 293-314 (RNRDMKEALIRVLCKKKITFCL) are Cytoplasmic-facing.

This sequence belongs to the G-protein coupled receptor 1 family. In terms of tissue distribution, olfactory epithelium.

The protein resides in the cell membrane. Its function is as follows. Odorant receptor. The chain is Olfactory receptor 1468 (Olr1468) from Rattus norvegicus (Rat).